Reading from the N-terminus, the 441-residue chain is Vacuolar cation/proton exchanger 5 (441 aa).

The N-myristoyl glycine moiety is linked to residue glycine 2. Topologically, residues 2-69 (GCCKVPALIQ…PNNSVLQSFK (68 aa)) are cytoplasmic. Residues cysteine 3 and cysteine 4 are each lipidated (S-palmitoyl cysteine). The helical transmembrane segment at 70–90 (IVILSNKLNLLLPFGPLAILL) threads the bilayer. Topologically, residues 91–97 (HYLTDNK) are extracellular. A helical membrane pass occupies residues 98 to 118 (GWIFLLSLVGITPLAERLGYA). Topologically, residues 119–129 (TEQLACYTGST) are cytoplasmic. Residues 130–150 (VGGLLNATFGNVTELIISIFA) form a helical membrane-spanning segment. Residues 139–174 (GNVTELIISIFALKSGMIRVVQLTLLGSILSNMLLV) are cation selection. The Extracellular segment spans residues 151–165 (LKSGMIRVVQLTLLG). The helical transmembrane segment at 166–186 (SILSNMLLVLGCAFFCGGLVF) threads the bilayer. Residues 187 to 197 (SQKEQVFDKGN) are Cytoplasmic-facing. The chain crosses the membrane as a helical span at residues 198 to 218 (AVVNSGLLLMAVMGLLFPAVL). Over 219–231 (HYTHSEVHAGSSE) the chain is Extracellular. Residues 232-252 (LALSRFSSCIMLVAYAAYLFF) form a helical membrane-spanning segment. The Cytoplasmic portion of the chain corresponds to 253–286 (QLKSQPSSYTPLTEETNQNEETSDDDEDPEISKW). Residues 287-307 (EAIIWLSILTAWVSLLSGYLV) form a helical membrane-spanning segment. The Extracellular segment spans residues 308-311 (DAIE). The helical transmembrane segment at 312 to 332 (GASVSWKIPISFISVILLPIV) threads the bilayer. Residues 333–354 (GNAAEHAGAIMFAMKDKLDLSL) are Cytoplasmic-facing. The interval 333-368 (GNAAEHAGAIMFAMKDKLDLSLGVAIGSSIQISMFA) is cation selection. The helical transmembrane segment at 355-375 (GVAIGSSIQISMFAVPFCVVI) threads the bilayer. The Extracellular segment spans residues 376–384 (GWMMGAQMD). The helical transmembrane segment at 385-405 (LNFQLFETATLFITVIVVAFF) threads the bilayer. At 406–412 (LQEGTSN) the chain is on the cytoplasmic side. Residues 413-433 (YFKGLMLILCYLIVAASFFVH) traverse the membrane as a helical segment. The Extracellular segment spans residues 434-441 (EDPHQDDI).

This sequence belongs to the Ca(2+):cation antiporter (CaCA) (TC 2.A.19) family. Cation/proton exchanger (CAX) subfamily.

The protein resides in the vacuole membrane. In terms of biological role, vacuolar cation/proton exchanger (CAX). Translocates Ca(2+) and other metal ions into vacuoles using the proton gradient formed by H(+)-ATPase and H(+)-pyrophosphatase. The polypeptide is Vacuolar cation/proton exchanger 5 (CAX5) (Arabidopsis thaliana (Mouse-ear cress)).